The primary structure comprises 124 residues: Holo-[acyl-carrier-protein] synthase (124 aa).

Residues aspartate 5 and glutamate 51 each contribute to the Mg(2+) site.

Belongs to the P-Pant transferase superfamily. AcpS family. The cofactor is Mg(2+).

Its subcellular location is the cytoplasm. The enzyme catalyses apo-[ACP] + CoA = holo-[ACP] + adenosine 3',5'-bisphosphate + H(+). Transfers the 4'-phosphopantetheine moiety from coenzyme A to a Ser of acyl-carrier-protein. The polypeptide is Holo-[acyl-carrier-protein] synthase (Hydrogenobaculum sp. (strain Y04AAS1)).